Here is a 148-residue protein sequence, read N- to C-terminus: Meiosis inducing protein mei3 (148 aa).

Over residues 1-20 (MSSQNTSNSRHPASSASALP) the composition is skewed to polar residues. The segment at 1-96 (MSSQNTSNSR…AQRIEHENKE (96 aa)) is disordered. Residues 21-46 (NRTNTARRSTSPRTSTGSSSTNTNTK) show a composition bias toward low complexity. The span at 75–86 (PMKRTKRVRRTP) shows a compositional bias: basic residues.

Functionally, acts as a critical meiotic inducer by binding non-covalently to protein kinase ran1/pat1 inhibiting its enzymatic activity. Inhibits ran1/pat1 by acting as a pseudosubstrate for ran1/pat1 instead of its natural substrate ste11. Inactivation of the ran1/pat1 protein kinase is both necessary and sufficient to divert a vegetative cell from mitotic division to meiotic differentiation. This is Meiosis inducing protein mei3 from Schizosaccharomyces pombe (strain 972 / ATCC 24843) (Fission yeast).